Consider the following 466-residue polypeptide: Carboxy-terminal processing protease CtpA (466 aa).

An N-terminal signal peptide occupies residues 1-36 (MKRQLKLFFIVLITAVVASALTLFITGNSSILGQKS). The region spanning 96–174 (DETISASFEG…TKVKLELNRA (79 aa)) is the PDZ domain. Residues serine 297, glutamate 308, and lysine 322 each act as charge relay system in the active site.

This sequence belongs to the peptidase S41A family.

The enzyme catalyses The enzyme shows specific recognition of a C-terminal tripeptide, Xaa-Yaa-Zaa, in which Xaa is preferably Ala or Leu, Yaa is preferably Ala or Tyr, and Zaa is preferably Ala, but then cleaves at a variable distance from the C-terminus. A typical cleavage is -Ala-Ala-|-Arg-Ala-Ala-Lys-Glu-Asn-Tyr-Ala-Leu-Ala-Ala.. This is Carboxy-terminal processing protease CtpA (ctpA) from Bacillus subtilis (strain 168).